The sequence spans 156 residues: Translation initiation factor IF-1, chloroplastic (156 aa).

The transit peptide at 1–81 (MASLSWWNPA…RRTTSIQCLS (81 aa)) directs the protein to the chloroplast. The disordered stretch occupies residues 51-79 (KSLLVKTQQQSKKKKNNSTNSRRTTSIQC). The span at 67–76 (NSTNSRRTTS) shows a compositional bias: low complexity. Positions 82–151 (QEQKWTHEGS…SKGRIIYRLR (70 aa)) constitute an S1-like domain.

The protein belongs to the IF-1 family. Component of the 30S ribosomal translation pre-initiation complex which assembles on the 30S ribosome in the order IF-2 and IF-3, IF-1 and N-formylmethionyl-tRNA(fMet); mRNA recruitment can occur at any time during PIC assembly.

It is found in the plastid. The protein resides in the chloroplast. Functionally, one of the essential components for the initiation of protein synthesis. Stabilizes the binding of IF-2 and IF-3 on the 30S subunit to which N-formylmethionyl-tRNA(fMet) subsequently binds. Helps modulate mRNA selection, yielding the 30S pre-initiation complex (PIC). Upon addition of the 50S ribosomal subunit IF-1, IF-2 and IF-3 are released leaving the mature 70S translation initiation complex. This is Translation initiation factor IF-1, chloroplastic (infA) from Solanum lycopersicum (Tomato).